Here is a 118-residue protein sequence, read N- to C-terminus: Small ribosomal subunit protein uS13 (118 aa).

The disordered stretch occupies residues 92 to 118 (RRSLPVRGQRTKTNARTRKGPRKPIKK).

The protein belongs to the universal ribosomal protein uS13 family. Part of the 30S ribosomal subunit. Forms a loose heterodimer with protein S19. Forms two bridges to the 50S subunit in the 70S ribosome.

Located at the top of the head of the 30S subunit, it contacts several helices of the 16S rRNA. In the 70S ribosome it contacts the 23S rRNA (bridge B1a) and protein L5 of the 50S subunit (bridge B1b), connecting the 2 subunits; these bridges are implicated in subunit movement. Contacts the tRNAs in the A and P-sites. This Acinetobacter baumannii (strain AB307-0294) protein is Small ribosomal subunit protein uS13.